Consider the following 165-residue polypeptide: 5-formyltetrahydrofolate cyclo-ligase (165 aa).

4-8 (KNSLR) is a binding site for ATP. Ile51 and Glu56 together coordinate substrate. 116-124 (RIGFGKGYY) contributes to the ATP binding site. Asp125 provides a ligand contact to Mg(2+). 2 residues coordinate ATP: Arg126 and Trp154. Residue Asp155 coordinates Mg(2+).

Belongs to the 5-formyltetrahydrofolate cyclo-ligase family. In terms of assembly, monomer or homodimer. Mg(2+) serves as cofactor.

The protein localises to the cytoplasm. The enzyme catalyses (6S)-5-formyl-5,6,7,8-tetrahydrofolate + ATP = (6R)-5,10-methenyltetrahydrofolate + ADP + phosphate. Its function is as follows. Involved in folate metabolism. Catalyzes the irreversible conversion of 5-formyltetrahydrofolate (5-FTHF) to yield 5,10-methenyltetrahydrofolate. This Mycoplasma genitalium (strain ATCC 33530 / DSM 19775 / NCTC 10195 / G37) (Mycoplasmoides genitalium) protein is 5-formyltetrahydrofolate cyclo-ligase.